The following is a 113-amino-acid chain: MKIVAFTLVAFVALAGASCPYAAPAVAPAAAPGYPAPPCPTNYLFSCQPNLAPVPCAQQAPAYGSAGAYTEQVPRYVENPSREQLQRFHQRVGMAALMEELRGLGQGIQGQQY.

The first 17 residues, 1-17, serve as a signal peptide directing secretion; that stretch reads MKIVAFTLVAFVALAGA. Positions 33 to 70 constitute a VM domain; sequence GYPAPPCPTNYLFSCQPNLAPVPCAQQAPAYGSAGAYT.

The protein belongs to the vitelline membrane family.

It localises to the secreted. Functionally, major early eggshell protein. The chain is Vitelline membrane protein Vm32E from Drosophila erecta (Fruit fly).